Here is a 387-residue protein sequence, read N- to C-terminus: Lipid-A-disaccharide synthase (387 aa).

It belongs to the LpxB family.

It catalyses the reaction 2-N,3-O-bis[(3R)-3-hydroxytetradecanoyl]-alpha-D-glucosaminyl 1-phosphate + UDP-2-N,3-O-bis[(3R)-3-hydroxytetradecanoyl]-alpha-D-glucosamine = lipid A disaccharide (E. coli) + UDP + H(+). It carries out the reaction a lipid X + a UDP-2-N,3-O-bis[(3R)-3-hydroxyacyl]-alpha-D-glucosamine = a lipid A disaccharide + UDP + H(+). It participates in glycolipid biosynthesis; lipid IV(A) biosynthesis; lipid IV(A) from (3R)-3-hydroxytetradecanoyl-[acyl-carrier-protein] and UDP-N-acetyl-alpha-D-glucosamine: step 5/6. Condensation of UDP-2,3-diacylglucosamine and 2,3-diacylglucosamine-1-phosphate to form lipid A disaccharide, a precursor of lipid A, a phosphorylated glycolipid that anchors the lipopolysaccharide to the outer membrane of the cell. This is Lipid-A-disaccharide synthase from Blochmanniella pennsylvanica (strain BPEN).